The sequence spans 286 residues: Putative electron transfer flavoprotein subunit YgcQ (286 aa).

Position 225–253 (225–253 (VCIVVGASGAAALMAGVRNSKFVVAINHD)) interacts with FAD.

This sequence belongs to the ETF alpha-subunit/FixB family. YgcQ and YgcR form a heterodimer.

In terms of biological role, may play a role in a redox process. The polypeptide is Putative electron transfer flavoprotein subunit YgcQ (ygcQ) (Escherichia coli (strain K12)).